Here is a 364-residue protein sequence, read N- to C-terminus: MPHPYPALTPEQKKELADIAHRIVAPGKGILAADESTGSIAKRLQSIGTENTEENRRFYRQLLLTADDRVNPCIGGVILFHETLYQKADDGRPFPQVIKSKGGVVGIKVDKGVVPLAGTNGETTTQGLDGLSERCAQYKKDGADFAKWRCVLKIGEHTPSSLAIMENANVLARYASICQQNGIVPIVEPEILPDGDHDLKRCQYVTEKVLAAVYKALSDHHVYLEGTLLKPNMVTPGHACTQKFSNEEIAMATVTALRRTVPPAVPGVTFLSGGQSEEEASINLNAINKCPLLKPWALTFSYGRALQASALKAWGGKKENLKAAQEEYIKRALANSLACQGKYTPSGQSGAAASESLFISNHAY.

Y5 is modified (phosphotyrosine). T9 carries the post-translational modification Phosphothreonine. 2 positions are modified to phosphoserine: S36 and S39. The residue at position 42 (K42) is an N6-acetyllysine; alternate. K42 is covalently cross-linked (Glycyl lysine isopeptide (Lys-Gly) (interchain with G-Cter in SUMO1); alternate). K42 participates in a covalent cross-link: Glycyl lysine isopeptide (Lys-Gly) (interchain with G-Cter in SUMO2); alternate. R43 provides a ligand contact to beta-D-fructose 1,6-bisphosphate. Position 46 is a phosphoserine (S46). Position 99 is an N6-(2-hydroxyisobutyryl)lysine (K99). Position 108 is an N6-acetyllysine (K108). An N6-acetyllysine; alternate modification is found at K111. N6-malonyllysine; alternate is present on K111. Position 132 is a phosphoserine (S132). K147 carries the post-translational modification N6-(2-hydroxyisobutyryl)lysine. Catalysis depends on E188, which acts as the Proton acceptor. The active-site Schiff-base intermediate with dihydroxyacetone-P is the K230. S272 is modified (phosphoserine). Beta-D-fructose 1,6-bisphosphate contacts are provided by residues 272 to 274 (SGG), S301, and R304. At K312 the chain carries N6-malonyllysine. K330 is modified (N6-acetyllysine).

Belongs to the class I fructose-bisphosphate aldolase family. Homotetramer. Interacts with SNX9 and WAS. Interacts with FBP2; the interaction blocks FBP2 inhibition by physiological concentrations of AMP and reduces inhibition by Ca(2+). In terms of tissue distribution, expressed in muscle, brain and hepatoma cells.

Its subcellular location is the cytoplasm. The protein resides in the myofibril. It is found in the sarcomere. The protein localises to the i band. It localises to the m line. It catalyses the reaction beta-D-fructose 1,6-bisphosphate = D-glyceraldehyde 3-phosphate + dihydroxyacetone phosphate. It participates in carbohydrate degradation; glycolysis; D-glyceraldehyde 3-phosphate and glycerone phosphate from D-glucose: step 4/4. Catalyzes the reversible conversion of beta-D-fructose 1,6-bisphosphate (FBP) into two triose phosphate and plays a key role in glycolysis and gluconeogenesis. In addition, may also function as scaffolding protein. The polypeptide is Fructose-bisphosphate aldolase A (Aldoa) (Rattus norvegicus (Rat)).